The following is a 496-amino-acid chain: Glycylpeptide N-tetradecanoyltransferase 1 (496 aa).

A disordered region spans residues 1–82 (MADESETAVK…SAQDQPVKMN (82 aa)). S31 and S47 each carry phosphoserine. The segment covering 55 to 66 (KKKKKKQKKKKE) has biased composition (basic residues). Residue S83 is modified to Phosphoserine. 11 residues coordinate tetradecanoyl-CoA: Q118, F119, W120, F247, L248, C249, V250, S256, R258, V259, and A260.

It belongs to the NMT family. In terms of tissue distribution, heart, gut, kidney, liver and placenta.

The protein localises to the cytoplasm. It is found in the cytosol. The protein resides in the membrane. It catalyses the reaction N-terminal glycyl-[protein] + tetradecanoyl-CoA = N-tetradecanoylglycyl-[protein] + CoA + H(+). It carries out the reaction N-terminal glycyl-L-lysyl-[protein] + tetradecanoyl-CoA = N-terminal glycyl-(N(6)-tetradecanoyl)-L-lysyl-[protein] + CoA + H(+). Its function is as follows. Adds a myristoyl group to the N-terminal glycine residue of certain cellular and viral proteins. Also able to mediate N-terminal lysine myristoylation of proteins: catalyzes myristoylation of ARF6 on both 'Gly-2' and 'Lys-3'. Lysine myristoylation is required to maintain ARF6 on membranes during the GTPase cycle. This chain is Glycylpeptide N-tetradecanoyltransferase 1, found in Homo sapiens (Human).